Here is a 288-residue protein sequence, read N- to C-terminus: MKSTSATKFSVLAAATFAAAHGIVSDIKFDNDWYTSSLVYQDPYANPVPERITWSFFGSGNGPVADFTTKDIVCNGNAKAAALVADVKAGATATFYWTVWPESHRGPVMTYLANCGGDCRTVDPSSLSYFKIDHAGYENGEWISDKIIANNNSYSLTIPEDIAPGNYLIRHELLALHSAYDELGAQFYPMCANLKISGSGTANPPGVKFPGAYKKDDAGILVNIYNGLTSYQIPGPEPYKSGSGSSDNAAEAVSSAAAEEPAAAATSAAAEEPAAAATSAAAATSAAX.

Positions 1 to 22 are cleaved as a signal peptide; the sequence is MKSTSATKFSVLAAATFAAAHG. Cu(2+)-binding residues include H21 and H104. Cystine bridges form between C74-C191 and C115-C119. Residue N151 is glycosylated (N-linked (GlcNAc...) asparagine). Residues H177 and Q186 each contribute to the O2 site. Y188 contacts Cu(2+). Residues 236–270 form a disordered region; sequence PEPYKSGSGSSDNAAEAVSSAAAEEPAAAATSAAA. A compositionally biased stretch (low complexity) spans 249–270; that stretch reads AAEAVSSAAAEEPAAAATSAAA.

The protein belongs to the polysaccharide monooxygenase AA9 family. It depends on Cu(2+) as a cofactor.

The protein localises to the secreted. It carries out the reaction [(1-&gt;4)-beta-D-glucosyl]n+m + reduced acceptor + O2 = 4-dehydro-beta-D-glucosyl-[(1-&gt;4)-beta-D-glucosyl]n-1 + [(1-&gt;4)-beta-D-glucosyl]m + acceptor + H2O.. In terms of biological role, lytic polysaccharide monooxygenase (LPMO) that depolymerizes crystalline and amorphous polysaccharides via the oxidation of scissile alpha- or beta-(1-4)-glycosidic bonds, yielding C1 and C4 oxidation products. Catalysis by LPMOs requires the reduction of the active-site copper from Cu(II) to Cu(I) by a reducing agent and H(2)O(2) or O(2) as a cosubstrate. Active on cellulose and on xyloglucan for deconstruction of plant biomass. The polypeptide is AA9 family lytic polysaccharide monooxygenase A (Geotrichum candidum (Oospora lactis)).